The sequence spans 85 residues: Toxin AahP1005 (85 aa).

A signal peptide spans 1-19 (MNYLVMISLALLFMTGVES). Residues 21 to 83 (KDGYIVDDKN…VSTKKKGGCN (63 aa)) form the LCN-type CS-alpha/beta domain. 4 cysteine pairs are disulfide-bonded: cysteine 31/cysteine 82, cysteine 35/cysteine 55, cysteine 41/cysteine 65, and cysteine 45/cysteine 67. Asparagine 83 is subject to Asparagine amide.

Belongs to the long (4 C-C) scorpion toxin superfamily. Sodium channel inhibitor family. Alpha subfamily. Expressed by the venom gland.

The protein localises to the secreted. Functionally, alpha toxins bind voltage-independently at site-3 of sodium channels (Nav) and inhibit the inactivation of the activated channels, thereby blocking neuronal transmission. The chain is Toxin AahP1005 from Androctonus australis (Sahara scorpion).